The sequence spans 23 residues: Chaperonin GroEL (23 aa).

Belongs to the chaperonin (HSP60) family. In terms of assembly, forms a cylinder of 14 subunits composed of two heptameric rings stacked back-to-back. Interacts with the co-chaperonin GroES. Post-translationally, phosphorylated on threonine.

It localises to the cytoplasm. The enzyme catalyses ATP + H2O + a folded polypeptide = ADP + phosphate + an unfolded polypeptide.. Functionally, together with its co-chaperonin GroES, plays an essential role in assisting protein folding. The GroEL-GroES system forms a nano-cage that allows encapsulation of the non-native substrate proteins and provides a physical environment optimized to promote and accelerate protein folding. The chain is Chaperonin GroEL from Acidithiobacillus ferrooxidans (Thiobacillus ferrooxidans).